We begin with the raw amino-acid sequence, 208 residues long: GTP-binding protein YPTM1 (208 aa).

Residues 15–23, 33–40, 63–67, 121–124, and 151–153 contribute to the GTP site; these read GDSSVGKSC, YVDSYIST, DTAGQ, NKCD, and SAK. The short motif at 37–45 is the Effector region element; it reads YISTIGVDF. Residues 189-208 are disordered; it reads QMKGRPIQQEQQKSSRCCST. A compositionally biased stretch (polar residues) spans 196–208; sequence QQEQQKSSRCCST. Residues Cys-205 and Cys-206 are each lipidated (S-geranylgeranyl cysteine).

It belongs to the small GTPase superfamily. Rab family. Low levels in coleoptiles.

It is found in the cell membrane. In terms of biological role, protein transport. Probably involved in vesicular traffic. This is GTP-binding protein YPTM1 (YPTM1) from Zea mays (Maize).